Consider the following 648-residue polypeptide: MEGKVIEVQSAWREGAHVDDAKYREMYAASVADPDAFWAEHGKRIDWMKPFSTVKNTSFEPGKVSIKWFEDGTTNVAHNCIDRHLETRGDQTAIIWEGDNPDEAKHISYRELHAQVCRMANVLRNRGVGKGDRVTLYMPMIPEAAYAMLACARLGAIHAIVFGGFSPDSLASRIQGCGSKVVITADEGLRGGRKVPLKANVDEAIKRLDADLVDHVIVVRRTGGSVAMEAGRDVYYDEAAEQVTDECPAVAVDAEHPLFILYTSGSTGQPKGVVHTTGGYLVYASMTHEYVFDYREGDVYWCTADVGWVTGHSYIVYGPLANGATTLMFEGIPTYPSTSRFWEVVDKHKVNIFYTAPTAIRSLMGGGEGPVKKTSRQSLRVLGSVGEPINPEAWEWYYNVVGDRRCSIVDTWWQTETGGILITPLPGATALKPGSATRPFFGVKPQMVDAEGKVLEGPCEGNLCIADSWPGQMRTVYGDHERFEQTYFSTYPGKYFTGDGARRDADGYYWITGRVDDVINVSGHRMGTAEVESSLVAHPKVAEAAVVGYPHNVKGQGIYAYVTLNDGEEGDDALRKELVTWVRKDIGPIASPDLIQFAPGLPKTRSGKIMRRILRKIAEDDFSSLGDTSTLAEPAVVDDLIENRQNRG.

CoA-binding positions include Arg190–Arg193 and Thr310. ATP is bound by residues Gly386–Pro388, Asp410–Thr415, Asp499, and Arg514. A CoA-binding site is contributed by Ser522. Arg525 contacts ATP. Mg(2+) is bound by residues Val536, His538, and Val541. Arg583 serves as a coordination point for CoA. N6-acetyllysine is present on Lys608.

This sequence belongs to the ATP-dependent AMP-binding enzyme family. It depends on Mg(2+) as a cofactor. Acetylated. Deacetylation by the SIR2-homolog deacetylase activates the enzyme.

The enzyme catalyses acetate + ATP + CoA = acetyl-CoA + AMP + diphosphate. Its function is as follows. Catalyzes the conversion of acetate into acetyl-CoA (AcCoA), an essential intermediate at the junction of anabolic and catabolic pathways. AcsA undergoes a two-step reaction. In the first half reaction, AcsA combines acetate with ATP to form acetyl-adenylate (AcAMP) intermediate. In the second half reaction, it can then transfer the acetyl group from AcAMP to the sulfhydryl group of CoA, forming the product AcCoA. In Methylobacterium radiotolerans (strain ATCC 27329 / DSM 1819 / JCM 2831 / NBRC 15690 / NCIMB 10815 / 0-1), this protein is Acetyl-coenzyme A synthetase.